Consider the following 180-residue polypeptide: ADP-ribosylation factor 4 (180 aa).

A lipid anchor (N-myristoyl glycine) is attached at G2. GTP-binding positions include 24 to 31 (GLDAAGKT), 67 to 71 (DVGGQ), and 126 to 129 (NKQD). S147 is subject to Phosphoserine.

This sequence belongs to the small GTPase superfamily. Arf family. As to quaternary structure, forms a complex containing RAB11A, ASAP1, RAB3IP, RAP11FIP3 and ARF4; the complex promotes preciliary trafficking; the complex binds to RHO in photoreceptor cells and promotes RHO ciliary transport.

It localises to the golgi apparatus. Its subcellular location is the membrane. Functionally, GTP-binding protein that functions as an allosteric activator of the cholera toxin catalytic subunit, an ADP-ribosyltransferase. Involved in protein trafficking; may modulate vesicle budding and uncoating within the Golgi apparatus. Part of the ciliary targeting complex containing Rab11, ASAP1, Rabin8/RAB3IP, RAB11FIP3 and ARF4, which direct preciliary vesicle trafficking to mother centriole and ciliogenesis initiation. The protein is ADP-ribosylation factor 4 (Arf4) of Mus musculus (Mouse).